Reading from the N-terminus, the 239-residue chain is MGHKINPKGLRLGYTQDWQSRWFAPKNMPALIIEDKRIRELIEERFKMAAISFVGIERAGAFLRINIHTARPGVVIGKKGADIEQLRKDLEKMTGSKTFVNVVEIKNPETDASLVAQSICMQIEKRAHYGAAMKKAIEKALAGKALGIKIMVSGRLGGAEIARTEWKREGRVPLHTLCAEIDYGTAEAMTISGKIGCKVWIFKKTHFAKSPKEILHELRKHREVTETPSGSAETVTEAK.

The KH type-2 domain maps to 38-106; it reads IRELIEERFK…KTFVNVVEIK (69 aa).

The protein belongs to the universal ribosomal protein uS3 family. Part of the 30S ribosomal subunit. Forms a tight complex with proteins S10 and S14.

Functionally, binds the lower part of the 30S subunit head. Binds mRNA in the 70S ribosome, positioning it for translation. This chain is Small ribosomal subunit protein uS3, found in Elusimicrobium minutum (strain Pei191).